Here is a 403-residue protein sequence, read N- to C-terminus: Argininosuccinate synthase (403 aa).

ATP-binding positions include 13 to 21 (AYSGGLDTS) and Ala-40. Residues Tyr-92 and Ser-97 each coordinate L-citrulline. Residue Gly-122 participates in ATP binding. Thr-124, Asn-128, and Asp-129 together coordinate L-aspartate. Asn-128 is an L-citrulline binding site. The L-citrulline site is built by Arg-132, Ser-181, Ser-190, Glu-266, and Tyr-278.

Belongs to the argininosuccinate synthase family. Type 1 subfamily. Homotetramer.

The protein localises to the cytoplasm. It catalyses the reaction L-citrulline + L-aspartate + ATP = 2-(N(omega)-L-arginino)succinate + AMP + diphosphate + H(+). It functions in the pathway amino-acid biosynthesis; L-arginine biosynthesis; L-arginine from L-ornithine and carbamoyl phosphate: step 2/3. This is Argininosuccinate synthase from Aliivibrio fischeri (strain MJ11) (Vibrio fischeri).